We begin with the raw amino-acid sequence, 601 residues long: Elongation factor 4 (601 aa).

One can recognise a tr-type G domain in the interval 5–187 (EHIRNFSIIA…AIVERLPAPE (183 aa)). GTP-binding positions include 17-22 (DHGKST) and 134-137 (NKID).

It belongs to the TRAFAC class translation factor GTPase superfamily. Classic translation factor GTPase family. LepA subfamily.

Its subcellular location is the cell inner membrane. It carries out the reaction GTP + H2O = GDP + phosphate + H(+). Required for accurate and efficient protein synthesis under certain stress conditions. May act as a fidelity factor of the translation reaction, by catalyzing a one-codon backward translocation of tRNAs on improperly translocated ribosomes. Back-translocation proceeds from a post-translocation (POST) complex to a pre-translocation (PRE) complex, thus giving elongation factor G a second chance to translocate the tRNAs correctly. Binds to ribosomes in a GTP-dependent manner. The chain is Elongation factor 4 from Nitratidesulfovibrio vulgaris (strain ATCC 29579 / DSM 644 / CCUG 34227 / NCIMB 8303 / VKM B-1760 / Hildenborough) (Desulfovibrio vulgaris).